Reading from the N-terminus, the 281-residue chain is Eukaryotic translation initiation factor 3 subunit G (281 aa).

The interval 1–32 (MSRPAGRTDWAEEDDETELALPSQTVVKNKDG) is disordered. Residues 202–280 (ATLRVTNVSE…LILRVEFAKK (79 aa)) enclose the RRM domain.

This sequence belongs to the eIF-3 subunit G family. As to quaternary structure, component of the eukaryotic translation initiation factor 3 (eIF-3) complex.

Its subcellular location is the cytoplasm. Its function is as follows. RNA-binding component of the eukaryotic translation initiation factor 3 (eIF-3) complex, which is involved in protein synthesis of a specialized repertoire of mRNAs and, together with other initiation factors, stimulates binding of mRNA and methionyl-tRNAi to the 40S ribosome. The eIF-3 complex specifically targets and initiates translation of a subset of mRNAs involved in cell proliferation. This subunit can bind 18S rRNA. This is Eukaryotic translation initiation factor 3 subunit G from Phaeosphaeria nodorum (strain SN15 / ATCC MYA-4574 / FGSC 10173) (Glume blotch fungus).